We begin with the raw amino-acid sequence, 228 residues long: Ras-related protein Rab-33B (228 aa).

N41, V42, G43, K44, T45, C46, T60, and T63 together coordinate GTP. T45 is a binding site for Mg(2+). The short motif at 54-66 is the Switch 1 element; that stretch reads GRFPQRTEATIGV. The Mg(2+) site is built by T63 and D86. Positions 87 to 106 match the Switch 2 motif; that stretch reads TAGQERFRKSMVQHYYRNVH. GTP-binding residues include G89, N146, K147, D149, A177, and K178. S-geranylgeranyl cysteine attachment occurs at residues C226 and C228. C228 is subject to Cysteine methyl ester.

This sequence belongs to the small GTPase superfamily. Rab family. Interacts (GTP- and GDP-bound forms) with ATG16L1; the complex consists of a tetramer where two RAB33B molecules bind independently one molecule of the ATG16L1 homodimer; the interaction promotes ATG12-ATG5-ATG16L1 complex recruitment to phagophores. Interacts with ATG16L2; however interaction is approximately hundred times lower than for ATG16L1. Interacts with RIC1 (via C-terminus domain); the interaction is direct with a preference for RAB33B-GTP. Interacts with RGP1. Mg(2+) serves as cofactor.

It is found in the golgi apparatus membrane. The protein localises to the golgi apparatus. It localises to the cis-Golgi network. The protein resides in the preautophagosomal structure membrane. It catalyses the reaction GTP + H2O = GDP + phosphate + H(+). Regulated by guanine nucleotide exchange factors (GEFs) which promote the exchange of bound GDP for free GTP. Regulated by GTPase activating proteins (GAPs) such as SGSM2 which increase the GTP hydrolysis activity. Inhibited by GDP dissociation inhibitors (GDIs). Its function is as follows. The small GTPases Rab are key regulators of intracellular membrane trafficking, from the formation of transport vesicles to their fusion with membranes. Rabs cycle between an inactive GDP-bound form and an active GTP-bound form that is able to recruit to membranes different sets of downstream effectors directly responsible for vesicle formation, movement, tethering and fusion. RAB33B acts, in coordination with RAB6A, to regulate intra-Golgi retrograde trafficking. Participates in autophagosome formation by recruiting the ATG12-ATG5-ATG16L1 complex to phagophores, probably in a nucleotide-independent manner. The protein is Ras-related protein Rab-33B (RAB33B) of Gallus gallus (Chicken).